The sequence spans 1071 residues: V-type proton ATPase catalytic subunit A (1071 aa).

Ala-2 is subject to N-acetylalanine. The residue at position 131 (Thr-131) is a Phosphothreonine. 257-264 contributes to the ATP binding site; that stretch reads GAFGCGKT. Residues 494–642 enclose the DOD-type homing endonuclease domain; the sequence is LLGLWIGDGL…LVSLARSLGL (149 aa). Residues Ser-858 and Ser-928 each carry the phosphoserine modification.

This sequence belongs to the ATPase alpha/beta chains family. In terms of assembly, V-ATPase is a heteromultimeric enzyme composed of a peripheral catalytic V1 complex (components A to H) attached to an integral membrane V0 proton pore complex (components: a, c, c', c'', d, e, f and VOA1). Interacts with RAV1 and RAV2 components of the RAVE complex, which are essential for the stability and assembly of V-ATPase. Post-translationally, this protein undergoes a protein self splicing that involves a post-translational excision of the VDE intervening region (intein) followed by peptide ligation.

Its subcellular location is the vacuole membrane. It catalyses the reaction ATP + H2O + 4 H(+)(in) = ADP + phosphate + 5 H(+)(out). In terms of biological role, catalytic subunit of the V1 complex of vacuolar(H+)-ATPase (V-ATPase), a multisubunit enzyme composed of a peripheral complex (V1) that hydrolyzes ATP and a membrane integral complex (V0) that translocates protons. V-ATPase is responsible for acidifying and maintaining the pH of intracellular compartments. PI-SceI is an endonuclease that can cleave at a site present in a VMA1 allele that lacks the derived endonuclease segment of the open reading frame; cleavage at this site only occurs during meiosis and initiates 'homing', a genetic event that converts a VMA1 allele lacking VDE into one that contains it. This Saccharomyces cerevisiae (strain ATCC 204508 / S288c) (Baker's yeast) protein is V-type proton ATPase catalytic subunit A.